We begin with the raw amino-acid sequence, 526 residues long: Peptide chain release factor 3 (526 aa).

The tr-type G domain occupies 8 to 277 (NKRRTFAIIS…GLTEWAPKPQ (270 aa)). Residues 17 to 24 (SHPDAGKT), 85 to 89 (DTPGH), and 139 to 142 (NKLD) each bind GTP.

The protein belongs to the TRAFAC class translation factor GTPase superfamily. Classic translation factor GTPase family. PrfC subfamily.

The protein resides in the cytoplasm. Functionally, increases the formation of ribosomal termination complexes and stimulates activities of RF-1 and RF-2. It binds guanine nucleotides and has strong preference for UGA stop codons. It may interact directly with the ribosome. The stimulation of RF-1 and RF-2 is significantly reduced by GTP and GDP, but not by GMP. This Actinobacillus pleuropneumoniae serotype 7 (strain AP76) protein is Peptide chain release factor 3.